The chain runs to 197 residues: GTP cyclohydrolase-2 (197 aa).

49 to 53 contacts GTP; the sequence is RVHSE. Zn(2+) is bound by residues cysteine 54, cysteine 65, and cysteine 67. Residues glutamine 70, 92 to 94, and threonine 114 contribute to the GTP site; that span reads EGR. The active-site Proton acceptor is aspartate 126. Arginine 128 serves as the catalytic Nucleophile. GTP-binding residues include threonine 149 and lysine 154.

It belongs to the GTP cyclohydrolase II family. Homodimer. It depends on Zn(2+) as a cofactor.

The enzyme catalyses GTP + 4 H2O = 2,5-diamino-6-hydroxy-4-(5-phosphoribosylamino)-pyrimidine + formate + 2 phosphate + 3 H(+). It participates in cofactor biosynthesis; riboflavin biosynthesis; 5-amino-6-(D-ribitylamino)uracil from GTP: step 1/4. Its function is as follows. Catalyzes the conversion of GTP to 2,5-diamino-6-ribosylamino-4(3H)-pyrimidinone 5'-phosphate (DARP), formate and pyrophosphate. The protein is GTP cyclohydrolase-2 of Pectobacterium atrosepticum (strain SCRI 1043 / ATCC BAA-672) (Erwinia carotovora subsp. atroseptica).